The following is a 775-amino-acid chain: MAIAFHTFLLQLLLFFFASFAEANDSRKTYLVQMKVGGHRYGSSSGHQELLGEVLDDDSTLADAFIYSYKESFTGFSASLTPRERQKLMRRREVLEVSRSRNLKLQTTRSWDFMNLTLKAERNPENESDLVVAVIDSGIWPYSELFGSDSPPPPGWENKCENITCNNKIVGARSYYPKKEKYKWVEEKSVIDVTGHGTHVASIVAGRKVEKAGYFGLAEGTMRGGVPNAKIAVYKTCWRVIRKNGREDSVCREDNILKAIDDAIADKVDIISYSQGFQFTPLQKDKVSWAFLRALKNGILTSAAAGNYANNGKFYYTVANGAPWVMTVAASLKDRIFETKLELEGEDKPIIVYDTINTFETQDSFYPLLNEKAPPESTRKRELIAERNGYSILSNYDEKDKGKDVFFEFAQINLLDEAIKEREKGAIVLGGKSYDFNESIKLQFPIASIFLDEQKKGKLWDYYKKDQSKERLAKIHKTEEIPREEGWVPTVAHLSSRGPNCDSFLANILKPDIAAPGLDIIAGWPENVKLSSDRPANDYRHLRFNIMSGTSMACPHATGLALYLKSFKRWSPSAIKSALMTTSSEMTDDDNEFAYGSGHLNATKVRDPGLVYETHYQDYIDYLCKLGYNTEKLRSHVGSDKIDCSKTEIDHDADLNYPTMTARVPLPLDTPFKKVFHRTVTNVNDGEFTYLREINYRGDKDFDEIIVDPPQLKFSELGETKTFTVTVTGISKRNWNKNRAFMTRNTWLTWTEKDGSRQVRSPIVIYSIKGPKACM.

An N-terminal signal peptide occupies residues 1-23 (MAIAFHTFLLQLLLFFFASFAEA). Asparagine 24 carries an N-linked (GlcNAc...) asparagine glycan. Residues 24–106 (NDSRKTYLVQ…VSRSRNLKLQ (83 aa)) constitute a propeptide, activation peptide. The Inhibitor I9 domain occupies 29-105 (TYLVQMKVGG…EVSRSRNLKL (77 aa)). A Peptidase S8 domain is found at 110–606 (SWDFMNLTLK…SGHLNATKVR (497 aa)). Asparagine 115 and asparagine 126 each carry an N-linked (GlcNAc...) asparagine glycan. Aspartate 136 functions as the Charge relay system in the catalytic mechanism. An N-linked (GlcNAc...) asparagine glycan is attached at asparagine 162. The Charge relay system role is filled by histidine 196. A PA domain is found at 365–459 (FYPLLNEKAP…FLDEQKKGKL (95 aa)). Asparagine 437 is a glycosylation site (N-linked (GlcNAc...) asparagine). The active-site Charge relay system is the serine 551. An N-linked (GlcNAc...) asparagine glycan is attached at asparagine 601.

Belongs to the peptidase S8 family. In terms of processing, the C-terminal propeptide is autocleaved.

The protein resides in the secreted. This chain is Subtilisin-like protease SBT4.1, found in Arabidopsis thaliana (Mouse-ear cress).